A 130-amino-acid polypeptide reads, in one-letter code: Serum amyloid A protein (130 aa).

A signal peptide spans 1–18 (MKLFTGLILCSLVLGVHS). At Q19 the chain carries Pyrrolidone carboxylic acid. The interval 86-130 (TDPLFKGTTSGQGQEDSRADQAANEWGRSGKDPNHFRPAGLPDKY) is disordered.

It belongs to the SAA family. In terms of processing, this protein is the precursor of amyloid protein A, which is formed by the removal of residues from the C-terminal end. Expressed by the liver; secreted in plasma.

The protein localises to the secreted. Functionally, major acute phase reactant. Apolipoprotein of the HDL complex. The chain is Serum amyloid A protein (SAA1) from Bos taurus (Bovine).